Reading from the N-terminus, the 289-residue chain is CBY1-interacting BAR domain-containing protein 1 (289 aa).

The transit peptide at 1-47 (MMRRTLENRNAQTKQLQTAVSNVEKHFGELCQIFAAYVRKTARLRDK) directs the protein to the mitochondrion. The tract at residues 10-220 (NAQTKQLQTA…NIDEDEDLEV (211 aa)) is BAR-like. Residues 107–178 (KMKRDDLKAT…INNFERQKMK (72 aa)) adopt a coiled-coil conformation. Residues 265–289 (LRKDQQAEDDEDDELDVTEEENFLK) are disordered. Acidic residues predominate over residues 271 to 289 (AEDDEDDELDVTEEENFLK).

It belongs to the CIBAR family. As to quaternary structure, homodimer (via BAR-like domain). Heterodimer with FAM92B (via BAR-like domains). Interacts (via BAR-like domain) with CBY1; this interaction is required for targeting FAM92A to centriole and cilium basal body. Interacts (via BAR-like domain) with CBY3; both proteins form a ninefold symmetric structure at the flagellar base; are recruited to the annulus in a mutually dependent manner and regulate annulus positionning.

It localises to the cytoplasm. The protein resides in the cytoskeleton. The protein localises to the microtubule organizing center. Its subcellular location is the centrosome. It is found in the centriole. It localises to the cilium basal body. The protein resides in the cell projection. The protein localises to the cilium. Its subcellular location is the nucleus. It is found in the mitochondrion inner membrane. It localises to the flagellum. Functionally, plays a critical role in regulating mitochondrial ultrastructure and function by maintaining the integrity of mitochondrial morphology, particularly the organization of cristae. Preferentially binds to negatively charged phospholipids like cardiolipin and phosphatidylinositol 4,5-bisphosphate enhancing its interaction with mitochondrial membranes. Induces membrane curvature and tubulation, which are critical for maintaining mitochondrial ultrastructure and the organization of cristae. Plays a crucial role in ciliogenesis. May play a role in limb development through its role in ciliogenesis. Plays a key role in the correct positioning of the annulus, a septin-based ring structure in the sperm flagellum, serving both as a physical barrier and a membrane diffusion barrier that separates the midpiece (MP) from the principal piece (PP). This positioning is essential for proper sperm motility and function. Interacts with CBY3 to form a complex which localizes to the curved membrane region of the flagellar pocket. By doing so, may provide stability and rigidity to the periannular membrane to prevent membrane deformation. This function is crucial for halting annulus migration at the proximal end of the fibrous sheath-containing PP. In Homo sapiens (Human), this protein is CBY1-interacting BAR domain-containing protein 1.